A 306-amino-acid chain; its full sequence is Eukaryotic translation initiation factor 2 subunit alpha (306 aa).

One can recognise an S1 motif domain in the interval 17-88 (DELVVVNVRQ…EKGYIDLSKR (72 aa)). At Ser52 the chain carries Phosphoserine. Position 179 is a phosphothreonine (Thr179). Residues Ser273, Ser295, Ser303, and Ser305 each carry the phosphoserine modification.

Belongs to the eIF-2-alpha family. As to quaternary structure, eukaryotic translation initiation factor 2 eIF2 is a heterotrimeric complex composed of an alpha, a beta and a gamma subunit.

It is found in the cytoplasm. It localises to the cytosol. Its function is as follows. eIF-2 functions in the early steps of protein synthesis by forming a ternary complex with GTP and initiator tRNA. This complex binds to a 40S ribosomal subunit, followed by mRNA binding to form a 43S pre-initiation complex. Junction of the 60S ribosomal subunit to form the 80S initiation complex is preceded by hydrolysis of the GTP bound to eIF-2 and release of an eIF-2-GDP binary complex. In order for eIF-2 to recycle and catalyze another round of initiation, the GDP bound to eIF-2 must exchange with GTP by way of a reaction catalyzed by eIF2B. The polypeptide is Eukaryotic translation initiation factor 2 subunit alpha (tif211) (Schizosaccharomyces pombe (strain 972 / ATCC 24843) (Fission yeast)).